Consider the following 237-residue polypeptide: Pyridoxine 5'-phosphate synthase (237 aa).

The 3-amino-2-oxopropyl phosphate site is built by asparagine 7 and arginine 18. Residue histidine 43 is the Proton acceptor of the active site. The 1-deoxy-D-xylulose 5-phosphate site is built by arginine 45 and histidine 50. The active-site Proton acceptor is the glutamate 70. 1-deoxy-D-xylulose 5-phosphate is bound at residue threonine 100. The Proton donor role is filled by histidine 190. 3-amino-2-oxopropyl phosphate-binding positions include aspartate 191 and 213 to 214 (GH).

The protein belongs to the PNP synthase family. In terms of assembly, homooctamer; tetramer of dimers.

The protein localises to the cytoplasm. It carries out the reaction 3-amino-2-oxopropyl phosphate + 1-deoxy-D-xylulose 5-phosphate = pyridoxine 5'-phosphate + phosphate + 2 H2O + H(+). It participates in cofactor biosynthesis; pyridoxine 5'-phosphate biosynthesis; pyridoxine 5'-phosphate from D-erythrose 4-phosphate: step 5/5. Its function is as follows. Catalyzes the complicated ring closure reaction between the two acyclic compounds 1-deoxy-D-xylulose-5-phosphate (DXP) and 3-amino-2-oxopropyl phosphate (1-amino-acetone-3-phosphate or AAP) to form pyridoxine 5'-phosphate (PNP) and inorganic phosphate. The protein is Pyridoxine 5'-phosphate synthase of Bacteroides thetaiotaomicron (strain ATCC 29148 / DSM 2079 / JCM 5827 / CCUG 10774 / NCTC 10582 / VPI-5482 / E50).